Here is a 166-residue protein sequence, read N- to C-terminus: Disulfide bond formation protein B (166 aa).

Residues M1–G10 are Cytoplasmic-facing. The chain crosses the membrane as a helical span at residues F11 to F27. Over A28–I45 the chain is Periplasmic. C37 and C40 are disulfide-bonded. A helical transmembrane segment spans residues G46–P62. The Cytoplasmic segment spans residues G63–V69. The chain crosses the membrane as a helical span at residues W70 to L86. Residues R87 to F143 lie on the Periplasmic side of the membrane. A disulfide bond links C102 and C129. Residues W144–R162 form a helical membrane-spanning segment. At R163–G166 the chain is on the cytoplasmic side.

This sequence belongs to the DsbB family.

It is found in the cell inner membrane. Required for disulfide bond formation in some periplasmic proteins. Acts by oxidizing the DsbA protein. In Chromobacterium violaceum (strain ATCC 12472 / DSM 30191 / JCM 1249 / CCUG 213 / NBRC 12614 / NCIMB 9131 / NCTC 9757 / MK), this protein is Disulfide bond formation protein B.